A 178-amino-acid polypeptide reads, in one-letter code: Large ribosomal subunit protein uL5 (178 aa).

This sequence belongs to the universal ribosomal protein uL5 family. As to quaternary structure, part of the 50S ribosomal subunit; part of the 5S rRNA/L5/L18/L25 subcomplex. Contacts the 5S rRNA and the P site tRNA. Forms a bridge to the 30S subunit in the 70S ribosome.

Functionally, this is one of the proteins that bind and probably mediate the attachment of the 5S RNA into the large ribosomal subunit, where it forms part of the central protuberance. In the 70S ribosome it contacts protein S13 of the 30S subunit (bridge B1b), connecting the 2 subunits; this bridge is implicated in subunit movement. Contacts the P site tRNA; the 5S rRNA and some of its associated proteins might help stabilize positioning of ribosome-bound tRNAs. The protein is Large ribosomal subunit protein uL5 of Acinetobacter baumannii (strain AB0057).